A 76-amino-acid chain; its full sequence is Alpha-amylase inhibitor Z-2685 (76 aa).

Intrachain disulfides connect Cys-9/Cys-25 and Cys-43/Cys-70.

Functionally, inhibits mammalian alpha-amylases specifically but has no action on plant and microbial alpha-amylases. The polypeptide is Alpha-amylase inhibitor Z-2685 (Streptomyces rochei (Streptomyces parvullus)).